The sequence spans 229 residues: Large ribosomal subunit protein uL1 (229 aa).

The protein belongs to the universal ribosomal protein uL1 family. In terms of assembly, part of the 50S ribosomal subunit.

Its function is as follows. Binds directly to 23S rRNA. The L1 stalk is quite mobile in the ribosome, and is involved in E site tRNA release. Protein L1 is also a translational repressor protein, it controls the translation of the L11 operon by binding to its mRNA. This chain is Large ribosomal subunit protein uL1, found in Rhodopseudomonas palustris (strain TIE-1).